The chain runs to 246 residues: Peptide methionine sulfoxide reductase (246 aa).

The active-site Cysteine sulfenic acid (-SOH) intermediate is Cys48. Cysteines 48 and 246 form a disulfide.

Conjugated to URM1, a ubiquitin-like protein.

The catalysed reaction is L-methionyl-[protein] + [thioredoxin]-disulfide + H2O = L-methionyl-(S)-S-oxide-[protein] + [thioredoxin]-dithiol. The enzyme catalyses [thioredoxin]-disulfide + L-methionine + H2O = L-methionine (S)-S-oxide + [thioredoxin]-dithiol. Its function is as follows. Has an important function as a repair enzyme for proteins that have been inactivated by oxidation. Catalyzes the reduction of methionine sulfoxide in proteins to methionine. Does not catalyze the reverse reaction involving the oxidation of methionine residues. The polypeptide is Peptide methionine sulfoxide reductase (Drosophila melanogaster (Fruit fly)).